The primary structure comprises 1108 residues: MRSEGAAPGPAAPLCGALSLLLGALLGKVIEGHGVTDNIQRFSSLPPYLPVSYHILRAETSFFLKEANQDLLRNSSLQARVESFFTYKTRQPPVLNASYGPFSVEKVVPLDLMLTSNFLGPTNKFSFDWKLKAHILRDKVYLSRPKVQVLFHIMGRDWDDHGAGEKLPCLRVFAFRETREVRGSCRLKGDLGLCVAELELLSSWFSAPTVGAGRKKSMDQPEGTPVELYYTVHPGNERGDCAGGDFRKGNAIRPGKDGLEETTSHLQRIGTVGLYRAQDSAQLSELRLDGNVVIWLPSRPVKQGEVVTAYVTISSNSSVDLFILRAKVKKGVNILSAQTREPRQWGVKQEVGSGGKHVTATVACQRLGPSPRNRSSSLFNEVVQMNFEIASFSSLSGTQPITWQVEYPRKGTTDIAVSEIFVSQKDLVGIVPLAMDTEILNTAVLTGKTVAMPIKVVSVEENSAVMDISESVECKSTDEDVIKVSERCDYIFVNGKEIKGKMDAVVNFTYQYLSAPLCVTVWVPRLPLQIEVSDTELSQIKGWRVPIVTNKRPTRESEDEDEEERRGRGCALQYQHATVRVLTQFVSEGAGPWGQPNYLLSPNWQFDITHLVADFMKLEEPHVATLQDSRVLVGREVGMTTIQVLSPLSDSILAEKTITVLDDKVSVTDLAIQLVAGLSVALYPNAENSKAVTAVVTAEEVLRTPKQEAVFSTWLQFSDGSVTPLDIYDTKDFSLAATSQDEAVVSVPQPRSPRWPVVVAEGEGQGPLIRVDMTIAEACQKSKRKSILAVGVGNVRVKFGQNDADSSPGGDYEEDEIKNHASDRRQKGQHHERTGQDGHLYGSSPVEREEGALRRATTTARSLLDNKVVKNSRADGGRLAGEGQLQNIPIDFTNFPAHVDLPKAGSGLEENDLVQTPRGLSDLEIGMYALLGVFCLAILVFLINCATFALKYRHKQVPLEGQASMTHSHDWVWLGNEAELLESMGDAPPPQDEHTTIIDRGPGACEESNHLLLNGGSHKHVQSQIHRSADSGGRQGREQKQDPLHSPTSKRKKVKFTTFTTIPPDDSCPTVNSIVSSNDEDIKWVCQDVAVGAPKELRNYLEKLKDKA.

The N-terminal stretch at 1 to 27 (MRSEGAAPGPAAPLCGALSLLLGALLG) is a signal peptide. Residues 28-922 (KVIEGHGVTD…LVQTPRGLSD (895 aa)) are Extracellular-facing. 2 N-linked (GlcNAc...) asparagine glycosylation sites follow: N316 and N373. Over residues 820 to 836 (HASDRRQKGQHHERTGQ) the composition is skewed to basic and acidic residues. The interval 820–857 (HASDRRQKGQHHERTGQDGHLYGSSPVEREEGALRRAT) is disordered. Residues 923–943 (LEIGMYALLGVFCLAILVFLI) traverse the membrane as a helical segment. Topologically, residues 944 to 1108 (NCATFALKYR…NYLEKLKDKA (165 aa)) are cytoplasmic. The segment at 1022-1072 (QSQIHRSADSGGRQGREQKQDPLHSPTSKRKKVKFTTFTTIPPDDSCPTVN) is disordered.

The protein belongs to the TMEM132 family.

The protein localises to the membrane. The sequence is that of Transmembrane protein 132C (TMEM132C) from Homo sapiens (Human).